The primary structure comprises 224 residues: Extracellular protease inhibitor 10 (224 aa).

The signal sequence occupies residues 1–22 (MKSAFTLSLALVAVTATISAAA). Kazal-like domains lie at 23-72 (DDNC…ECAS), 90-127 (TSGT…AKCK), and 156-210 (GYQG…PCPS). An N-linked (GlcNAc...) asparagine glycan is attached at Asn25. Disulfide bonds link Cys26–Cys56, Cys30–Cys49, and Cys38–Cys70. The disordered stretch occupies residues 69-92 (ECASTPASSATPSPVTSSTGSTSG). Residues 71–92 (ASTPASSATPSPVTSSTGSTSG) show a composition bias toward low complexity. Cystine bridges form between Cys96/Cys126, Cys100/Cys119, Cys162/Cys193, Cys167/Cys186, and Cys175/Cys208. Asn199 carries N-linked (GlcNAc...) asparagine glycosylation. Residues 202–224 (MVGEGPCPSQEQQQQQQQQQQKL) form a disordered region. Low complexity predominate over residues 211–224 (QEQQQQQQQQQQKL).

In terms of assembly, interacts with host subtilisin-like protease P69B.

The protein localises to the secreted. Secreted effector that interacts with and inhibits the pathogenesis-related P69B subtilisin-like serine protease of host tomato. Inhibition of host proteases by a pathogen extracellular protease inhibitor forms a specific type of defense-counterdefense mechanism between plants and microbial pathogens. The protein is Extracellular protease inhibitor 10 of Phytophthora infestans (Potato late blight agent).